The primary structure comprises 519 residues: Na(+)/H(+) exchange regulatory cofactor NHE-RF3 (519 aa).

3 PDZ domains span residues 9-90 (ECKL…LDGD), 134-215 (RLCY…VDKE), and 243-323 (IVEM…VDKE). A phosphoserine mark is found at Ser148, Ser192, Ser250, Ser334, and Ser348. Residues 347–374 (GSVKEAPAPTPTSLEVSSPPDTTEEVDH) are disordered. A compositionally biased stretch (polar residues) spans 357 to 367 (PTSLEVSSPPD). The region spanning 378–458 (LCRLAKGENG…NVTLLVCGKK (81 aa)) is the PDZ 4 domain. The residue at position 451 (Thr451) is a Phosphothreonine. The disordered stretch occupies residues 473–519 (SLADPPDTPPDSKEGIVVESKHDSHMAKERAHSTASHSSSNSEDTEM). The segment covering 482–504 (PDSKEGIVVESKHDSHMAKERAH) has biased composition (basic and acidic residues). Phosphoserine occurs at positions 492, 508, 510, 511, 512, and 514. A compositionally biased stretch (low complexity) spans 505 to 519 (STASHSSSNSEDTEM).

It belongs to the NHER family. As to quaternary structure, interacts with PDZK1IP1 and ABCC2. Binds to the C-terminal region of SLC26A3. Interacts (via PDZ domains 1 and 3) with SCARB1 (C-terminal domain). Forms a heterodimeric complex with NHERF1. Interacts with AKAP2, BCR, CFTR, SLCO1A1, SLC22A12, SLC22A4, SLC22A5, NHERF2 and SLC17A1. Component of a complex, composed of PDZK1, SYNGAP1, KLHL17 and NMDA receptors. Interacts (via PDZ1 domain) directly with KLHL17; the interaction is important for integrity of actin cytoskeleton structures in neurons. Interacts (via C-terminal PDZ domain) with SLC26A6 (via C-terminal domain). Interacts (via C-terminal PDZ domain) with SLC9A3 (via C-terminal domain). Interacts (via the first PDZ domain) with PTGIR (via non-isoprenylated C-terminus). Interacts (via PDZ domains 1 and 3) with SLC5A8 (via PDZ-binding motif); interaction increases nicotinate transport activity of SLC5A8.

The protein localises to the membrane. The protein resides in the cell membrane. Its function is as follows. A scaffold protein that connects plasma membrane proteins and regulatory components, regulating their surface expression in epithelial cells apical domains. May be involved in the coordination of a diverse range of regulatory processes for ion transport and second messenger cascades. In complex with NHERF1, may cluster proteins that are functionally dependent in a mutual fashion and modulate the trafficking and the activity of the associated membrane proteins. May play a role in the cellular mechanisms associated with multidrug resistance through its interaction with ABCC2 and PDZK1IP1. May potentiate the CFTR chloride channel activity. Required for normal cell-surface expression of SCARB1. Plays a role in maintaining normal plasma cholesterol levels via its effects on SCARB1. Plays a role in the normal localization and function of the chloride-anion exchanger SLC26A6 to the plasma membrane in the brush border of the proximal tubule of the kidney. May be involved in the regulation of proximal tubular Na(+)-dependent inorganic phosphate cotransport therefore playing an important role in tubule function. This Pongo abelii (Sumatran orangutan) protein is Na(+)/H(+) exchange regulatory cofactor NHE-RF3 (PDZK1).